A 177-amino-acid polypeptide reads, in one-letter code: ATP synthase subunit delta, chloroplastic (177 aa).

It belongs to the ATPase delta chain family. F-type ATPases have 2 components, F(1) - the catalytic core - and F(0) - the membrane proton channel. F(1) has five subunits: alpha(3), beta(3), gamma(1), delta(1), epsilon(1). CF(0) has four main subunits: a(1), b(1), b'(1) and c(10-14). The alpha and beta chains form an alternating ring which encloses part of the gamma chain. F(1) is attached to F(0) by a central stalk formed by the gamma and epsilon chains, while a peripheral stalk is formed by the delta, b and b' chains.

The protein localises to the plastid. It localises to the chloroplast thylakoid membrane. Functionally, f(1)F(0) ATP synthase produces ATP from ADP in the presence of a proton or sodium gradient. F-type ATPases consist of two structural domains, F(1) containing the extramembraneous catalytic core and F(0) containing the membrane proton channel, linked together by a central stalk and a peripheral stalk. During catalysis, ATP synthesis in the catalytic domain of F(1) is coupled via a rotary mechanism of the central stalk subunits to proton translocation. Its function is as follows. This protein is part of the stalk that links CF(0) to CF(1). It either transmits conformational changes from CF(0) to CF(1) or is implicated in proton conduction. The polypeptide is ATP synthase subunit delta, chloroplastic (Galdieria sulphuraria (Red alga)).